The sequence spans 186 residues: MSEGIDIKELKRRMDGAISVFKGDIASLRTGRASANILDPVTVEAYGSRMPLNQVANITVPEPRMLSVSVWDKSMVSAVERGIRESNLGLNPIIDGQNLRIPLPELNEERRKSLVKVAHDYAEKSKVAIRHVRRDGMDGLKKAEKDGVIGQDESRAQSERVQKMTDETISEIDRLLGEKEKEIMQV.

Positions 144–163 (EKDGVIGQDESRAQSERVQK) are disordered.

Belongs to the RRF family.

It localises to the cytoplasm. Functionally, responsible for the release of ribosomes from messenger RNA at the termination of protein biosynthesis. May increase the efficiency of translation by recycling ribosomes from one round of translation to another. This Rhizobium johnstonii (strain DSM 114642 / LMG 32736 / 3841) (Rhizobium leguminosarum bv. viciae) protein is Ribosome-recycling factor.